We begin with the raw amino-acid sequence, 369 residues long: Type 2 DNA topoisomerase 6 subunit A (369 aa).

The 139-residue stretch at 11 to 149 (QRDLLAREKL…FHMRPEEDGA (139 aa)) folds into the Topo IIA-type catalytic domain. Y106 (O-(5'-phospho-DNA)-tyrosine intermediate) is an active-site residue. Mg(2+)-binding residues include E202 and D254.

The protein belongs to the TOP6A family. Homodimer. Heterotetramer of two Top6A and two Top6B chains. The cofactor is Mg(2+).

The catalysed reaction is ATP-dependent breakage, passage and rejoining of double-stranded DNA.. Functionally, relaxes both positive and negative superturns and exhibits a strong decatenase activity. The polypeptide is Type 2 DNA topoisomerase 6 subunit A (Methanosarcina barkeri (strain Fusaro / DSM 804)).